A 220-amino-acid polypeptide reads, in one-letter code: Ribosomal RNA large subunit methyltransferase E (220 aa).

Residues Gly60, Trp62, Asp92, Asp108, and Asp133 each contribute to the S-adenosyl-L-methionine site. The active-site Proton acceptor is the Lys173. Positions 197 to 220 (RKPKASRDKSSETFILGRQLKQPR) are disordered.

The protein belongs to the class I-like SAM-binding methyltransferase superfamily. RNA methyltransferase RlmE family.

Its subcellular location is the cytoplasm. The catalysed reaction is uridine(2552) in 23S rRNA + S-adenosyl-L-methionine = 2'-O-methyluridine(2552) in 23S rRNA + S-adenosyl-L-homocysteine + H(+). Functionally, specifically methylates the uridine in position 2552 of 23S rRNA at the 2'-O position of the ribose in the fully assembled 50S ribosomal subunit. The protein is Ribosomal RNA large subunit methyltransferase E of Burkholderia ambifaria (strain MC40-6).